A 555-amino-acid polypeptide reads, in one-letter code: Exodeoxyribonuclease 7 large subunit (555 aa).

The protein belongs to the XseA family. In terms of assembly, heterooligomer composed of large and small subunits.

The protein localises to the cytoplasm. The enzyme catalyses Exonucleolytic cleavage in either 5'- to 3'- or 3'- to 5'-direction to yield nucleoside 5'-phosphates.. In terms of biological role, bidirectionally degrades single-stranded DNA into large acid-insoluble oligonucleotides, which are then degraded further into small acid-soluble oligonucleotides. This Chlamydia felis (strain Fe/C-56) (Chlamydophila felis) protein is Exodeoxyribonuclease 7 large subunit.